A 184-amino-acid polypeptide reads, in one-letter code: ATP synthase subunit b, chloroplastic (184 aa).

A helical membrane pass occupies residues 27 to 49 (LATNPINLSVVFGVLIFFGKGVL).

Belongs to the ATPase B chain family. F-type ATPases have 2 components, F(1) - the catalytic core - and F(0) - the membrane proton channel. F(1) has five subunits: alpha(3), beta(3), gamma(1), delta(1), epsilon(1). F(0) has four main subunits: a(1), b(1), b'(1) and c(10-14). The alpha and beta chains form an alternating ring which encloses part of the gamma chain. F(1) is attached to F(0) by a central stalk formed by the gamma and epsilon chains, while a peripheral stalk is formed by the delta, b and b' chains.

The protein localises to the plastid. It localises to the chloroplast thylakoid membrane. Functionally, f(1)F(0) ATP synthase produces ATP from ADP in the presence of a proton or sodium gradient. F-type ATPases consist of two structural domains, F(1) containing the extramembraneous catalytic core and F(0) containing the membrane proton channel, linked together by a central stalk and a peripheral stalk. During catalysis, ATP synthesis in the catalytic domain of F(1) is coupled via a rotary mechanism of the central stalk subunits to proton translocation. In terms of biological role, component of the F(0) channel, it forms part of the peripheral stalk, linking F(1) to F(0). The polypeptide is ATP synthase subunit b, chloroplastic (Arabidopsis thaliana (Mouse-ear cress)).